A 134-amino-acid chain; its full sequence is Large ribosomal subunit protein bL20 (134 aa).

It belongs to the bacterial ribosomal protein bL20 family.

Functionally, binds directly to 23S ribosomal RNA and is necessary for the in vitro assembly process of the 50S ribosomal subunit. It is not involved in the protein synthesizing functions of that subunit. The polypeptide is Large ribosomal subunit protein bL20 (Brucella abortus (strain S19)).